The sequence spans 1060 residues: Bumetanide-sensitive sodium-(potassium)-chloride cotransporter (1060 aa).

Over 1–122 (MNDENRFNVS…KSPTPAVGIK (122 aa)) the chain is Cytoplasmic. 2 consecutive transmembrane segments (helical) span residues 123–143 (LGWI…VMLF) and 154–174 (GIGL…ITTL). At 175–197 (SMSAICTNGEVKGGGIYYIISRS) the chain is on the cytoplasmic side. 2 helical membrane-spanning segments follow: residues 198–218 (LGPE…AVAA) and 250–270 (IVGT…MDWE). Residues 271–275 (SKAQN) lie on the Cytoplasmic side of the membrane. A run of 2 helical transmembrane segments spans residues 276–296 (FLIA…IMGP) and 332–352 (FFSV…GANI). Residues 353–367 (SGDLKDPASAIPKGT) are Cytoplasmic-facing. A helical transmembrane segment spans residues 368–388 (LLALLISMVSYTLMVLFAGGG). Residues N396, N404, and N419 are each glycosylated (N-linked (GlcNAc...) asparagine). The chain crosses the membrane as a helical span at residues 432 to 452 (VMQLMSAWGPFIYGGCWAATL). Topologically, residues 453–497 (STALTNLLSVPRLIQALGVDRIYPGLIFFSKPYGRHGEPYRGYVL) are cytoplasmic. The next 2 membrane-spanning stretches (helical) occupy residues 498–518 (TFFV…APLI) and 563–583 (CVAI…AIFF). The Cytoplasmic portion of the chain corresponds to 584–642 (TLYLIVHYRRPDVNWGSSTQAQMYKTALSSAHALARTGEHVKNYWPQLLVLAGRPQARP). Residues 643 to 663 (ALVDLGNLISKAGSLMIVGDI) form a helical membrane-spanning segment. N-linked (GlcNAc...) asparagine glycosylation occurs at N816. The helical transmembrane segment at 882–902 (TLDVWWLYDDGGLTILLPYII) threads the bilayer. Topologically, residues 903 to 1060 (SQRSAWANCK…NHTSVLTFYS (158 aa)) are cytoplasmic.

This sequence belongs to the SLC12A transporter family.

It is found in the membrane. Electrically silent transporter system. Mediates sodium and chloride reabsorption. Plays a vital role in the regulation of ionic balance and cell volume. In Manduca sexta (Tobacco hawkmoth), this protein is Bumetanide-sensitive sodium-(potassium)-chloride cotransporter.